A 191-amino-acid chain; its full sequence is Molybdenum cofactor guanylyltransferase (191 aa).

GTP contacts are provided by residues Leu13–Gly15, Lys26, Asp72, and Asp102. Residue Asp102 coordinates Mg(2+).

Belongs to the MobA family. As to quaternary structure, monomer. The cofactor is Mg(2+).

It is found in the cytoplasm. It carries out the reaction Mo-molybdopterin + GTP + H(+) = Mo-molybdopterin guanine dinucleotide + diphosphate. Its function is as follows. Transfers a GMP moiety from GTP to Mo-molybdopterin (Mo-MPT) cofactor (Moco or molybdenum cofactor) to form Mo-molybdopterin guanine dinucleotide (Mo-MGD) cofactor. This Pseudomonas putida (strain GB-1) protein is Molybdenum cofactor guanylyltransferase.